The primary structure comprises 988 residues: Transposase for transposon Tn1546 (988 aa).

The protein belongs to the transposase 7 family.

Its function is as follows. Required for transposition of transposon Tn1546. The polypeptide is Transposase for transposon Tn1546 (Enterococcus faecium (Streptococcus faecium)).